Reading from the N-terminus, the 110-residue chain is UPF0145 protein (110 aa).

It belongs to the UPF0145 family.

This Listeria ivanovii protein is UPF0145 protein.